A 306-amino-acid polypeptide reads, in one-letter code: Methionyl-tRNA formyltransferase (306 aa).

A (6S)-5,6,7,8-tetrahydrofolate-binding site is contributed by 110–113; the sequence is SLLP.

The protein belongs to the Fmt family.

The catalysed reaction is L-methionyl-tRNA(fMet) + (6R)-10-formyltetrahydrofolate = N-formyl-L-methionyl-tRNA(fMet) + (6S)-5,6,7,8-tetrahydrofolate + H(+). Its function is as follows. Attaches a formyl group to the free amino group of methionyl-tRNA(fMet). The formyl group appears to play a dual role in the initiator identity of N-formylmethionyl-tRNA by promoting its recognition by IF2 and preventing the misappropriation of this tRNA by the elongation apparatus. The protein is Methionyl-tRNA formyltransferase of Brucella melitensis biotype 2 (strain ATCC 23457).